The chain runs to 260 residues: Winged helix repair factor 1 (260 aa).

3 winged helix domain regions span residues 38–110, 126–185, and 186–260; these read FTED…MVVM, SRAT…LAVP, and GAGR…ISET.

It belongs to the STK19 family. Monomer in solution. Homodimer; when bound to DNA. Component of a transcription-coupled nucleotide excision repair (TC-NER) complex which assembles and interacts with the multiprotein RNA polymerase II complex when it stalls at DNA lesions.

It is found in the nucleus. Its function is as follows. DNA-binding protein which is required for efficient transcription-coupled nucleotide excision repair (TC-NER). Acts as part of a TC-NER complex which assembles and interacts with RNA polymerase II (RNAPII) when it stalls at DNA lesions. The chain is Winged helix repair factor 1 from Xenopus laevis (African clawed frog).